The sequence spans 208 residues: Small ribosomal subunit protein uS4 (208 aa).

The S4 RNA-binding domain maps to 98 to 164 (TRLDNVVYRL…PKVKSIREIA (67 aa)).

It belongs to the universal ribosomal protein uS4 family. In terms of assembly, part of the 30S ribosomal subunit. Contacts protein S5. The interaction surface between S4 and S5 is involved in control of translational fidelity.

In terms of biological role, one of the primary rRNA binding proteins, it binds directly to 16S rRNA where it nucleates assembly of the body of the 30S subunit. Functionally, with S5 and S12 plays an important role in translational accuracy. This is Small ribosomal subunit protein uS4 from Ruminiclostridium cellulolyticum (strain ATCC 35319 / DSM 5812 / JCM 6584 / H10) (Clostridium cellulolyticum).